A 239-amino-acid polypeptide reads, in one-letter code: Ribonuclease HII (239 aa).

Residues 30 to 221 form the RNase H type-2 domain; it reads GPVAGVDEVG…VRRVATRSNG (192 aa). A divalent metal cation contacts are provided by D36, E37, and D130. A disordered region spans residues 219–239; that stretch reads SNGAAAAEREADPPQERDGTG. Basic and acidic residues predominate over residues 225–239; the sequence is AEREADPPQERDGTG.

It belongs to the RNase HII family. Mn(2+) serves as cofactor. It depends on Mg(2+) as a cofactor.

The protein localises to the cytoplasm. The enzyme catalyses Endonucleolytic cleavage to 5'-phosphomonoester.. In terms of biological role, endonuclease that specifically degrades the RNA of RNA-DNA hybrids. The protein is Ribonuclease HII of Mycobacterium marinum (strain ATCC BAA-535 / M).